A 596-amino-acid chain; its full sequence is Elongation factor 4 (596 aa).

One can recognise a tr-type G domain in the interval K2–E184. GTP is bound by residues D14–T19 and N131–D134.

The protein belongs to the TRAFAC class translation factor GTPase superfamily. Classic translation factor GTPase family. LepA subfamily.

The protein localises to the cell inner membrane. The catalysed reaction is GTP + H2O = GDP + phosphate + H(+). Required for accurate and efficient protein synthesis under certain stress conditions. May act as a fidelity factor of the translation reaction, by catalyzing a one-codon backward translocation of tRNAs on improperly translocated ribosomes. Back-translocation proceeds from a post-translocation (POST) complex to a pre-translocation (PRE) complex, thus giving elongation factor G a second chance to translocate the tRNAs correctly. Binds to ribosomes in a GTP-dependent manner. The protein is Elongation factor 4 of Shewanella piezotolerans (strain WP3 / JCM 13877).